The following is a 243-amino-acid chain: Ribonuclease PH (243 aa).

Residues arginine 91 and 129–131 (GTR) contribute to the phosphate site.

This sequence belongs to the RNase PH family. As to quaternary structure, homohexameric ring arranged as a trimer of dimers.

The catalysed reaction is tRNA(n+1) + phosphate = tRNA(n) + a ribonucleoside 5'-diphosphate. Phosphorolytic 3'-5' exoribonuclease that plays an important role in tRNA 3'-end maturation. Removes nucleotide residues following the 3'-CCA terminus of tRNAs; can also add nucleotides to the ends of RNA molecules by using nucleoside diphosphates as substrates, but this may not be physiologically important. Probably plays a role in initiation of 16S rRNA degradation (leading to ribosome degradation) during starvation. This is Ribonuclease PH from Burkholderia pseudomallei (strain 668).